The sequence spans 697 residues: Tryptophan synthase (697 aa).

The tract at residues 1 to 298 (MTEQIKKTFL…AVVEPINEMY (298 aa)) is tryptophan synthase alpha chain. Residues E50 and D61 each act as proton acceptor in the active site. Residues 298-697 (YLPQKYGMFG…GPKIGWDLRF (400 aa)) are tryptophan synthase beta chain. K381 carries the post-translational modification N6-(pyridoxal phosphate)lysine.

It in the N-terminal section; belongs to the TrpA family. In the C-terminal section; belongs to the TrpB family. The cofactor is pyridoxal 5'-phosphate.

The enzyme catalyses (1S,2R)-1-C-(indol-3-yl)glycerol 3-phosphate + L-serine = D-glyceraldehyde 3-phosphate + L-tryptophan + H2O. It functions in the pathway amino-acid biosynthesis; L-tryptophan biosynthesis; L-tryptophan from chorismate: step 5/5. The polypeptide is Tryptophan synthase (trp2) (Schizosaccharomyces pombe (strain 972 / ATCC 24843) (Fission yeast)).